A 351-amino-acid chain; its full sequence is UDP-N-acetylglucosamine--N-acetylmuramyl-(pentapeptide) pyrophosphoryl-undecaprenol N-acetylglucosamine transferase (351 aa).

Residues 12–14 (TGG), N124, R160, S188, I239, 258–263 (ALTVCE), and Q283 contribute to the UDP-N-acetyl-alpha-D-glucosamine site.

It belongs to the glycosyltransferase 28 family. MurG subfamily.

Its subcellular location is the cell inner membrane. The enzyme catalyses di-trans,octa-cis-undecaprenyl diphospho-N-acetyl-alpha-D-muramoyl-L-alanyl-D-glutamyl-meso-2,6-diaminopimeloyl-D-alanyl-D-alanine + UDP-N-acetyl-alpha-D-glucosamine = di-trans,octa-cis-undecaprenyl diphospho-[N-acetyl-alpha-D-glucosaminyl-(1-&gt;4)]-N-acetyl-alpha-D-muramoyl-L-alanyl-D-glutamyl-meso-2,6-diaminopimeloyl-D-alanyl-D-alanine + UDP + H(+). It participates in cell wall biogenesis; peptidoglycan biosynthesis. In terms of biological role, cell wall formation. Catalyzes the transfer of a GlcNAc subunit on undecaprenyl-pyrophosphoryl-MurNAc-pentapeptide (lipid intermediate I) to form undecaprenyl-pyrophosphoryl-MurNAc-(pentapeptide)GlcNAc (lipid intermediate II). The protein is UDP-N-acetylglucosamine--N-acetylmuramyl-(pentapeptide) pyrophosphoryl-undecaprenol N-acetylglucosamine transferase of Actinobacillus pleuropneumoniae serotype 5b (strain L20).